Here is a 352-residue protein sequence, read N- to C-terminus: MPVLHNRISNKELKARMLAETQPRTTISFYKYFNILNPLDFRNSLYQQFTDLSVFGRVYIAKEGINAQISLPTHNLEAFKALLYSVDPALDNLRLNIALDDDGKSFWVLRMKVRDRVVADGIDDETFDPSKTGEYLKAEQVNQMLDNPDTLFVDMRNHYEYEVGHFENAIEVPSDTFREQLPMVAEMLQDNKDKNIVMYCTGGIRCEKASAYMLHNGFKNVYHVEGGIIEYARKAREQGLPVRFVGKNFVFDERMGERISDDVIAHCHQCGVSCDSHTNCKNEGCHLLFIQCPECATKFEGCCSEMCREEVRLPETEQRARRAGRENGAKIFNKSRHRLQDGLNSTSLQSVE.

The Rhodanese domain maps to 146 to 240 (DNPDTLFVDM…YARKAREQGL (95 aa)). Cys-200 functions as the Cysteine persulfide intermediate in the catalytic mechanism. Residues 315–328 (ETEQRARRAGRENG) are compositionally biased toward basic and acidic residues. The segment at 315-352 (ETEQRARRAGRENGAKIFNKSRHRLQDGLNSTSLQSVE) is disordered. Polar residues predominate over residues 342-352 (GLNSTSLQSVE).

This sequence belongs to the TrhO family.

It carries out the reaction uridine(34) in tRNA + AH2 + O2 = 5-hydroxyuridine(34) in tRNA + A + H2O. Its function is as follows. Catalyzes oxygen-dependent 5-hydroxyuridine (ho5U) modification at position 34 in tRNAs. This chain is tRNA uridine(34) hydroxylase, found in Photorhabdus laumondii subsp. laumondii (strain DSM 15139 / CIP 105565 / TT01) (Photorhabdus luminescens subsp. laumondii).